A 529-amino-acid chain; its full sequence is VIN3-like protein 3 (529 aa).

Residues 97–104 carry the Nuclear localization signal motif; sequence PKRQKRDL. The PHD-type zinc finger occupies 137–207; the sequence is RCSCCICFKY…CFNCVSCGKT (71 aa). A Nuclear localization signal motif is present at residues 214–221; sequence LKKQLIIA. Positions 312-411 constitute a Fibronectin type-III domain; it reads GSMKIRIESV…FIVSTKTLQD (100 aa). The VIN3-Interacting Domain (VID) stretch occupies residues 421–529; it reads MSNCNNANKM…AGVSLILLQD (109 aa).

As to quaternary structure, interacts with VIN3.

It is found in the nucleus. Involved in both the vernalization and photoperiod pathways by regulating gene expression. The sequence is that of VIN3-like protein 3 (VIL3) from Arabidopsis thaliana (Mouse-ear cress).